Consider the following 366-residue polypeptide: Histidinol-phosphate aminotransferase 2 (366 aa).

Lys-226 carries the N6-(pyridoxal phosphate)lysine modification.

This sequence belongs to the class-II pyridoxal-phosphate-dependent aminotransferase family. Histidinol-phosphate aminotransferase subfamily. Homodimer. It depends on pyridoxal 5'-phosphate as a cofactor.

It carries out the reaction L-histidinol phosphate + 2-oxoglutarate = 3-(imidazol-4-yl)-2-oxopropyl phosphate + L-glutamate. Its pathway is amino-acid biosynthesis; L-histidine biosynthesis; L-histidine from 5-phospho-alpha-D-ribose 1-diphosphate: step 7/9. The polypeptide is Histidinol-phosphate aminotransferase 2 (hisC2) (Haemophilus influenzae (strain ATCC 51907 / DSM 11121 / KW20 / Rd)).